Reading from the N-terminus, the 165-residue chain is Phosphopantetheine adenylyltransferase (165 aa).

Ser-10 provides a ligand contact to substrate. Residues 10-11 (SF) and His-18 each bind ATP. Substrate-binding residues include Lys-42, Leu-74, and Arg-88. Residues 89-91 (GLR), Glu-99, and 124-130 (YSYLSSS) each bind ATP.

The protein belongs to the bacterial CoaD family. Homohexamer. Requires Mg(2+) as cofactor.

It is found in the cytoplasm. It catalyses the reaction (R)-4'-phosphopantetheine + ATP + H(+) = 3'-dephospho-CoA + diphosphate. The protein operates within cofactor biosynthesis; coenzyme A biosynthesis; CoA from (R)-pantothenate: step 4/5. Its function is as follows. Reversibly transfers an adenylyl group from ATP to 4'-phosphopantetheine, yielding dephospho-CoA (dPCoA) and pyrophosphate. This Halalkalibacterium halodurans (strain ATCC BAA-125 / DSM 18197 / FERM 7344 / JCM 9153 / C-125) (Bacillus halodurans) protein is Phosphopantetheine adenylyltransferase.